The sequence spans 253 residues: Acidic 26 kDa endochitinase (253 aa).

An N-terminal signal peptide occupies residues Met-1–Ala-24. Glu-92 acts as the Proton donor in catalysis. A disulfide bridge connects residues Cys-212 and Cys-244.

The protein belongs to the glycosyl hydrolase 19 family. Chitinase class II subfamily.

It is found in the secreted. Its subcellular location is the extracellular space. The catalysed reaction is Random endo-hydrolysis of N-acetyl-beta-D-glucosaminide (1-&gt;4)-beta-linkages in chitin and chitodextrins.. Defense against chitin-containing fungal pathogens. The protein is Acidic 26 kDa endochitinase (CHI3) of Solanum lycopersicum (Tomato).